The primary structure comprises 284 residues: NADH-cytochrome b5 reductase 1 (284 aa).

Residues 8 to 28 (PFIIFATVAAIISSAVAYYFF) traverse the membrane as a helical segment. Positions 41 to 144 (NDFQKFPLIE…RGPKGFFTYT (104 aa)) constitute an FAD-binding FR-type domain. FAD is bound by residues 124 to 139 (ESKK…GPKG) and 150 to 182 (SFGM…KVSL).

It belongs to the flavoprotein pyridine nucleotide cytochrome reductase family. Monomer. Component of the 2-(3-amino-3-carboxypropyl)histidine synthase complex composed of DPH1, DPH2, DPH3 and a NADH-dependent reductase, predominantly CBR1. It depends on FAD as a cofactor.

The protein resides in the mitochondrion outer membrane. The catalysed reaction is 2 Fe(III)-[cytochrome b5] + NADH = 2 Fe(II)-[cytochrome b5] + NAD(+) + H(+). The enzyme catalyses 2 Fe(3+)-[Dph3] + NADH = 2 Fe(2+)-[Dph3] + NAD(+) + H(+). Its pathway is protein modification; peptidyl-diphthamide biosynthesis. NADH-dependent reductase for DPH3 and cytochrome b5. Required for the first step of diphthamide biosynthesis, a post-translational modification of histidine which occurs in elongation factor 2. DPH1 and DPH2 transfer a 3-amino-3-carboxypropyl (ACP) group from S-adenosyl-L-methionine (SAM) to a histidine residue, the reaction is assisted by a reduction system comprising DPH3 and a NADH-dependent reductase, predominantly CBR1. By reducing DPH3, also involved in the formation of the tRNA wobble base modification mcm5s 2U (5-methoxycarbonylmethyl-2-thiouridine), mediated by the elongator complex. The cytochrome b5/NADH cytochrome b5 reductase electron transfer system supports the catalytic activity of several sterol biosynthetic enzymes. The protein is NADH-cytochrome b5 reductase 1 (CBR1) of Debaryomyces hansenii (strain ATCC 36239 / CBS 767 / BCRC 21394 / JCM 1990 / NBRC 0083 / IGC 2968) (Yeast).